The following is a 1782-amino-acid chain: Signal-induced proliferation-associated 1-like protein 1 (1782 aa).

3 disordered regions span residues 1-28, 47-125, and 140-171; these read MTSLKRSQTERPVTADRASVVSTDGAPK, GSSV…VSLN, and KNKTGPAESMDSRFLMPEAYPSSPRKALRRIR. Over residues 84 to 94 the composition is skewed to basic and acidic residues; it reads PPRKENVKESS. Low complexity predominate over residues 95–125; it reads RSSQEIETSSCLESLSSKGSPVSQGSSVSLN. Phosphoserine occurs at positions 162, 187, 193, 208, 255, and 288. Residues 277 to 297 are disordered; the sequence is EREKPLKRRSKSETGDSSIFR. In terms of domain architecture, Rap-GAP spans 599-816; it reads LMKLDEQGLN…RTRQEYLKDL (218 aa). One can recognise a PDZ domain in the interval 953-1031; it reads EMTLRRNGLG…VVIIPPHDDC (79 aa). Disordered regions lie at residues 1069 to 1128 and 1144 to 1213; these read QRNA…RLSP and SQCR…SLAD. Phosphoserine is present on residues Ser1078, Ser1087, Ser1116, Ser1127, Ser1149, Ser1170, and Ser1181. Residues 1080–1093 show a composition bias toward polar residues; the sequence is QVPSQLQSPMTSRL. Low complexity predominate over residues 1149–1159; sequence SPSNLSSSSET. Residues 1186–1205 show a composition bias toward polar residues; the sequence is DRQNTQSDISGSGKSTPSWQ. Phosphoserine is present on residues Ser1234 and Ser1249. Positions 1247–1285 are disordered; it reads HLSPNKQGHSDSHYSSHSSSNTLSSNASSAHSDEKWYDG. Over residues 1261–1276 the composition is skewed to low complexity; that stretch reads SSHSSSNTLSSNASSA. Ser1305 is subject to Phosphoserine; by PLK2. Residues 1307–1342 are disordered; sequence IDTASYGPSHGSTASLGASTSSPRSGPGKEKVAPLW. Phosphothreonine; by PLK2 is present on Thr1309. Residues 1315-1328 show a composition bias toward low complexity; sequence SHGSTASLGASTSS. Ser1328 bears the Phosphoserine; by CDK5 mark. Position 1345 is a phosphoserine (Ser1345). Positions 1358-1368 are enriched in basic and acidic residues; it reads TEGHGMDRKAE. A disordered region spans residues 1358–1454; sequence TEGHGMDRKA…SSSGPRTFYP (97 aa). A phosphoserine mark is found at Ser1369, Ser1370, Ser1391, Ser1410, and Ser1412. Residues 1378–1410 are compositionally biased toward polar residues; that stretch reads KSQGGSSPLSRENSTFSINDAASHTSTMSSRHS. Residues 1432–1447 show a composition bias toward low complexity; sequence SSQLAPSFSSSSSSSS. Ser1507 and Ser1528 each carry phosphoserine. Thr1530 carries the phosphothreonine modification. Phosphoserine occurs at positions 1533, 1544, 1547, 1564, and 1567. Residue Arg1580 is modified to Asymmetric dimethylarginine. 9 positions are modified to phosphoserine: Ser1582, Ser1624, Ser1626, Ser1629, Ser1687, Ser1690, Ser1707, Ser1708, and Ser1712. The segment at 1625 to 1647 is disordered; it reads ASDSSLTDIQETRRQPIPDPGLM. Positions 1713–1773 form a coiled coil; that stretch reads PTLASKVDQL…ASDKLKKFTE (61 aa).

As to quaternary structure, interacts with DLG4, PDLIM5, PDLIM7 and LZTS3. Interacts with the actin cytoskeleton. Interacts (via PDZ domain) with EPHA4 (via PDZ motif); controls neuronal morphology through regulation of the RAP1 (RAP1A or RAP1B) and RAP2 (RAP2A, RAP2B or RAP2C) GTPases. Post-translationally, ubiquitinated and degraded by the SCF(BTRC) following phosphorylation by PLK2. Phosphorylated at Ser-1328 by CDK5, creating a docking site for the POLO box domains of PLK2. Subsequently, PLK2 binds and phosphorylates SIPA1L1, leading to ubiquitination and degradation by the proteasome.

It is found in the cytoplasm. Its subcellular location is the cytoskeleton. It localises to the postsynaptic density. The protein resides in the synapse. The protein localises to the synaptosome. In terms of biological role, stimulates the GTPase activity of RAP2A. Promotes reorganization of the actin cytoskeleton and recruits DLG4 to F-actin. Contributes to the regulation of dendritic spine morphogenesis. This is Signal-induced proliferation-associated 1-like protein 1 (Sipa1l1) from Mus musculus (Mouse).